Here is a 273-residue protein sequence, read N- to C-terminus: Large ribosomal subunit protein uL2cz/uL2cy (273 aa).

Disordered regions lie at residues 1–27 (MAKH…SNPR) and 225–273 (PVDH…RRRK).

This sequence belongs to the universal ribosomal protein uL2 family. Part of the 50S ribosomal subunit.

The protein resides in the plastid. It localises to the chloroplast. The sequence is that of Large ribosomal subunit protein uL2cz/uL2cy (rpl2-A) from Lolium perenne (Perennial ryegrass).